We begin with the raw amino-acid sequence, 537 residues long: DELLA protein GAI (537 aa).

Residues 1–33 (MKRDHQEISGSGSNPAESSSIKGKLWEEDPDAG) are disordered. Positions 9–20 (SGSGSNPAESSS) are enriched in low complexity. Residues 37–41 (DELLA) carry the DELLA motif motif. The tract at residues 131–157 (KSDPGLEITRKRAKTESSSSSSSTTTR) is disordered. Residues 147-156 (SSSSSSSTTT) are compositionally biased toward low complexity. In terms of domain architecture, GRAS spans 162 to 533 (IDSQEAGVRL…RPLIAHLGLA (372 aa)). Positions 169–223 (VRLVHTLMACAEAVQQDNLKLADALVKHIGLLASSQTGAMRKVATYFAEALARRI) are leucine repeat I (LRI). A VHIID region spans residues 241 to 306 (QIPFYETCPY…GGPPAFRLTG (66 aa)). The VHIID signature appears at 272–276 (VHVID). The tract at residues 320-352 (QVGWKLAQLAERIGIEFEFRGFVANSLADLEPE) is leucine repeat II (LRII). Residues 364–454 (VAVNAVFELH…ELYLGRQICN (91 aa)) form a PFYRE region. The short motif at 372–376 (LHPLL) is the LXXLL motif element. The interval 457 to 533 (ACEGMDRVER…RPLIAHLGLA (77 aa)) is SAW.

Belongs to the GRAS family. DELLA subfamily. In terms of processing, phosphorylated. Ubiquitinated. Upon GA application it is ubiquitinated, leading to its subsequent degradation.

It localises to the nucleus. Functionally, probable transcriptional regulator that acts as a repressor of the gibberellin (GA) signaling pathway. Probably acts by participating in large multiprotein complexes that represses transcription of GA-inducible genes. Upon GA application, it is degraded by the proteasome, allowing the GA signaling pathway. This chain is DELLA protein GAI (GAI), found in Gossypium hirsutum (Upland cotton).